Consider the following 97-residue polypeptide: MIGKQATLRDIVLEELVQPIDLHCHEELTEEVEEAVVEEEPEYTPYKIIVVCGGCETQLKLYVLATDFGIRSFQASLLENVKLVCPACREDIRNGRR.

The tract at residues 1–40 is E7 terminal domain; it reads MIGKQATLRDIVLEELVQPIDLHCHEELTEEVEEAVVEEE. The LXCXE motif; interaction with host RB1 and TMEM173/STING motif lies at 22–26; the sequence is LHCHE. Residues 52 to 88 fold into a zinc finger; the sequence is CGGCETQLKLYVLATDFGIRSFQASLLENVKLVCPAC. Positions 70–78 match the Nuclear export signal motif; it reads IRSFQASLL.

Belongs to the papillomaviridae E7 protein family. Homodimer. Homooligomer. Interacts with host RB1; this interaction induces dissociation of RB1-E2F1 complex thereby disrupting RB1 activity. Interacts with host EP300; this interaction represses EP300 transcriptional activity. Interacts with protein E2; this interaction inhibits E7 oncogenic activity. Interacts with host TMEM173/STING; this interaction impairs the ability of TMEM173/STING to sense cytosolic DNA and promote the production of type I interferon (IFN-alpha and IFN-beta). Post-translationally, highly phosphorylated.

The protein localises to the host cytoplasm. Its subcellular location is the host nucleus. Plays a role in viral genome replication by driving entry of quiescent cells into the cell cycle. Stimulation of progression from G1 to S phase allows the virus to efficiently use the cellular DNA replicating machinery to achieve viral genome replication. E7 protein has both transforming and trans-activating activities. Induces the disassembly of the E2F1 transcription factor from RB1, with subsequent transcriptional activation of E2F1-regulated S-phase genes. Interferes with host histone deacetylation mediated by HDAC1 and HDAC2, leading to transcription activation. Also plays a role in the inhibition of both antiviral and antiproliferative functions of host interferon alpha. Interaction with host TMEM173/STING impairs the ability of TMEM173/STING to sense cytosolic DNA and promote the production of type I interferon (IFN-alpha and IFN-beta). The sequence is that of Protein E7 from Human papillomavirus 23.